The sequence spans 148 residues: Globin, monomeric component M-IV (148 aa).

The Globin domain occupies 2-147 (GLSAAQRQVV…ISGALISGLQ (146 aa)). Position 91 (His91) interacts with heme b.

Monomer.

This Glycera dibranchiata (Bloodworm) protein is Globin, monomeric component M-IV.